Reading from the N-terminus, the 159-residue chain is Heat shock protein beta-9 (159 aa).

The region spanning 36–147 is the sHSP domain; sequence LLRDSPAAQE…EAQTGPSPRL (112 aa).

The protein belongs to the small heat shock protein (HSP20) family. Testis specific.

The protein localises to the cytoplasm. Its subcellular location is the nucleus. The sequence is that of Heat shock protein beta-9 (HSPB9) from Homo sapiens (Human).